A 182-amino-acid chain; its full sequence is Helofensin-3 (182 aa).

A signal peptide spans 1 to 26 (MQMDWLFIAVISGIGLLSSGVPGTQG). Residues 27–64 (AYTTEQCRALNGSCNFYACFPKNVIIGKCDWWGWSCCA) form a C(6)C(4)C(9)C(6)CC 1; approximate repeat. A C(6)C(4)C(9)C(6)CC 2; approximate repeat occupies 65-101 (RTPLERCTAKKGTCTKTGCTKTDTDHGPCDGGAQCCQ). A C(6)C(4)C(9)C(6)CC 3; approximate repeat occupies 102-138 (RDPVKYCKFHGNVCGRGKCPMDHIPIGECTPGYPCCK). One copy of the C(6)C(4)C(9)C(6)CC 4; approximate repeat lies at 139–176 (RDGPAYCKSKGGKCLNRCPQIVPTNVIGVCATGVPCCK).

It belongs to the beta-defensin family. Helofensin subfamily. As to expression, expressed by the mandibular venom gland.

The protein resides in the secreted. Lethal toxin which possesses an inhibitory effect on direct electrical stimulation of the isolated hemi-diaphragm of mice. Neither hemorrhagic nor hemolytic activities are detected. Phospholipase A2 activity, proteolytic activity and arginine esterolytic activity are absent. This is Helofensin-3 from Heloderma suspectum cinctum (Banded Gila monster).